Here is a 328-residue protein sequence, read N- to C-terminus: Diaminopimelate epimerase (328 aa).

Asn14 and Asn73 together coordinate substrate. Cys82 functions as the Proton donor in the catalytic mechanism. Residues 83 to 84 (GN), Asn170, Asn206, and 224 to 225 (ER) contribute to the substrate site. The Proton acceptor role is filled by Cys233. 234–235 (GT) contacts substrate.

The protein belongs to the diaminopimelate epimerase family. Homodimer.

Its subcellular location is the cytoplasm. The enzyme catalyses (2S,6S)-2,6-diaminopimelate = meso-2,6-diaminopimelate. It participates in amino-acid biosynthesis; L-lysine biosynthesis via DAP pathway; DL-2,6-diaminopimelate from LL-2,6-diaminopimelate: step 1/1. Functionally, catalyzes the stereoinversion of LL-2,6-diaminopimelate (L,L-DAP) to meso-diaminopimelate (meso-DAP), a precursor of L-lysine and an essential component of the bacterial peptidoglycan. The protein is Diaminopimelate epimerase of Listeria welshimeri serovar 6b (strain ATCC 35897 / DSM 20650 / CCUG 15529 / CIP 8149 / NCTC 11857 / SLCC 5334 / V8).